We begin with the raw amino-acid sequence, 97 residues long: UPF0235 protein cbdbA1230 (97 aa).

This sequence belongs to the UPF0235 family.

This Dehalococcoides mccartyi (strain CBDB1) protein is UPF0235 protein cbdbA1230.